Consider the following 612-residue polypeptide: Poly(A) RNA polymerase, mitochondrial (612 aa).

Residues 1–57 (MNSLVRRSAQQLSLWRTYCIKHNASEAASPGRNAGRPNYEEFIGRHQRQAQCSIVVQ) constitute a mitochondrion transit peptide. ATP is bound by residues 83-89 (YCVRQDE) and 228-229 (GC). Positions 230 and 232 each coordinate Mg(2+). The region spanning 427 to 463 (SLSELLLQFFEFYSQFDFHNRAISLNEGKPLSKPDHS) is the PAP-associated domain. Disordered stretches follow at residues 555 to 574 (AGAT…KSAS) and 588 to 612 (SELK…RRSR).

It belongs to the DNA polymerase type-B-like family. Mg(2+) serves as cofactor. Requires Mn(2+) as cofactor.

The protein resides in the mitochondrion. It carries out the reaction RNA(n) + ATP = RNA(n)-3'-adenine ribonucleotide + diphosphate. Polymerase that creates the 3' poly(A) tail of mitochondrial transcripts. This is not required for transcript stability or translation but may maintain mRNA integrity by protecting 3' termini from degradation. The sequence is that of Poly(A) RNA polymerase, mitochondrial from Drosophila melanogaster (Fruit fly).